We begin with the raw amino-acid sequence, 107 residues long: Hydrogenase expression/formation protein HoxL (107 aa).

This sequence belongs to the HupF/HypC family.

The protein is Hydrogenase expression/formation protein HoxL (hoxL) of Cupriavidus necator (strain ATCC 17699 / DSM 428 / KCTC 22496 / NCIMB 10442 / H16 / Stanier 337) (Ralstonia eutropha).